Here is a 471-residue protein sequence, read N- to C-terminus: Histidinol dehydrogenase (471 aa).

Residues Y139, Q204, and N236 each coordinate NAD(+). Substrate-binding residues include T259, Q281, and H284. Zn(2+)-binding residues include Q281 and H284. Catalysis depends on proton acceptor residues E350 and H351. Substrate-binding residues include H351, D384, E438, and H443. D384 provides a ligand contact to Zn(2+). A Zn(2+)-binding site is contributed by H443.

Belongs to the histidinol dehydrogenase family. Requires Zn(2+) as cofactor.

The catalysed reaction is L-histidinol + 2 NAD(+) + H2O = L-histidine + 2 NADH + 3 H(+). The protein operates within amino-acid biosynthesis; L-histidine biosynthesis; L-histidine from 5-phospho-alpha-D-ribose 1-diphosphate: step 9/9. Its function is as follows. Catalyzes the sequential NAD-dependent oxidations of L-histidinol to L-histidinaldehyde and then to L-histidine. The sequence is that of Histidinol dehydrogenase from Bifidobacterium longum (strain NCC 2705).